The primary structure comprises 475 residues: Homeobox even-skipped homolog protein 2 (475 aa).

Disordered stretches follow at residues 82–113 and 155–189; these read PSSESTVSSEIASATESRKKPSHYSEAAAEAD and TSASGSGLGSLHGGGGGGNSGAAALGGSGSGSGAD. Positions 83 to 96 are enriched in low complexity; that stretch reads SSESTVSSEIASAT. Positions 160–186 are enriched in gly residues; that stretch reads SGLGSLHGGGGGGNSGAAALGGSGSGS. Residues 191–250 constitute a DNA-binding region (homeobox); sequence VRRYRTAFTREQIARLEKEFYRENYVSRPRRCELAAALNLPETTIKVWFQNRRMKDKRQR.

It belongs to the even-skipped homeobox family.

The protein resides in the nucleus. The sequence is that of Homeobox even-skipped homolog protein 2 (Evx2) from Mus musculus (Mouse).